A 380-amino-acid polypeptide reads, in one-letter code: Cytochrome b (380 aa).

Transmembrane regions (helical) follow at residues 34 to 54, 78 to 99, 114 to 134, and 179 to 199; these read FGSL…FLAM, WLVR…YLHI, WNIG…GYVL, and FFAF…LHLL. Heme b is bound by residues His84 and His98. The heme b site is built by His183 and His197. An a ubiquinone-binding site is contributed by His202. 4 helical membrane-spanning segments follow: residues 227–247, 289–309, 321–341, and 348–368; these read YKDT…SMLS, LGGV…PMIH, MTQF…WIGG, and FIEI…IFMP.

This sequence belongs to the cytochrome b family. In terms of assembly, the cytochrome bc1 complex contains 3 respiratory subunits (MT-CYB, CYC1 and UQCRFS1), 2 core proteins (UQCRC1 and UQCRC2) and probably 6 low-molecular weight proteins. Heme b serves as cofactor.

The protein localises to the mitochondrion inner membrane. In terms of biological role, component of the ubiquinol-cytochrome c reductase complex (complex III or cytochrome b-c1 complex) that is part of the mitochondrial respiratory chain. The b-c1 complex mediates electron transfer from ubiquinol to cytochrome c. Contributes to the generation of a proton gradient across the mitochondrial membrane that is then used for ATP synthesis. This chain is Cytochrome b (mt-cyb), found in Ranodon sibiricus (Siberian salamander).